The following is a 239-amino-acid chain: Sugar fermentation stimulation protein homolog (239 aa).

Belongs to the SfsA family.

This Microcystis aeruginosa (strain NIES-843 / IAM M-2473) protein is Sugar fermentation stimulation protein homolog.